Here is a 928-residue protein sequence, read N- to C-terminus: Serine/threonine-protein kinase atg1 (928 aa).

The Protein kinase domain maps to Tyr-6–Ile-315. Residues Ile-12 to Val-20 and Lys-35 contribute to the ATP site. Asp-149 (proton acceptor) is an active-site residue. Disordered regions lie at residues Pro-318–Arg-470 and Phe-544–Ala-571. Residues Thr-359–Tyr-371 show a composition bias toward basic and acidic residues. Residues Thr-437–Glu-452 show a composition bias toward polar residues. Composition is skewed to basic and acidic residues over residues Gln-459–Arg-470 and Ser-548–Tyr-564.

The protein belongs to the protein kinase superfamily. Ser/Thr protein kinase family. APG1/unc-51/ULK1 subfamily. Homodimer. Forms a ternary complex with ATG13 and ATG17.

The protein localises to the cytoplasm. It localises to the preautophagosomal structure membrane. It carries out the reaction L-seryl-[protein] + ATP = O-phospho-L-seryl-[protein] + ADP + H(+). It catalyses the reaction L-threonyl-[protein] + ATP = O-phospho-L-threonyl-[protein] + ADP + H(+). Functionally, serine/threonine protein kinase involved in the cytoplasm to vacuole transport (Cvt) and found to be essential in autophagy, where it is required for the formation of autophagosomes. Involved in the clearance of protein aggregates which cannot be efficiently cleared by the proteasome. Required for selective autophagic degradation of the nucleus (nucleophagy) as well as for mitophagy which contributes to regulate mitochondrial quantity and quality by eliminating the mitochondria to a basal level to fulfill cellular energy requirements and preventing excess ROS production. Also involved in endoplasmic reticulum-specific autophagic process, in selective removal of ER-associated degradation (ERAD) substrates. Plays a key role in ATG9 and ATG23 cycling through the pre-autophagosomal structure and is necessary to promote ATG18 binding to ATG9 through phosphorylation of ATG9. Catalyzes phosphorylation of ATG4, decreasing the interaction between ATG4 and ATG8 and impairing deconjugation of PE-conjugated forms of ATG8. The sequence is that of Serine/threonine-protein kinase atg1 from Aspergillus clavatus (strain ATCC 1007 / CBS 513.65 / DSM 816 / NCTC 3887 / NRRL 1 / QM 1276 / 107).